Here is a 460-residue protein sequence, read N- to C-terminus: Bifunctional protein GlmU (460 aa).

The segment at 1-232 is pyrophosphorylase; that stretch reads MENVAAIILA…SDEIMGVNDR (232 aa). UDP-N-acetyl-alpha-D-glucosamine contacts are provided by residues 9-12, K23, Q75, and 80-81; these read LAAG and GT. D105 lines the Mg(2+) pocket. UDP-N-acetyl-alpha-D-glucosamine is bound by residues G142, E157, N172, and N230. Position 230 (N230) interacts with Mg(2+). Residues 233–253 are linker; the sequence is AQLAQAARILRRRINRDLMLS. The segment at 254–460 is N-acetyltransferase; the sequence is GVSLVDPEQT…GWRIRMKKKT (207 aa). UDP-N-acetyl-alpha-D-glucosamine-binding residues include R336 and K354. The Proton acceptor role is filled by H366. UDP-N-acetyl-alpha-D-glucosamine contacts are provided by Y369 and N380. Residues 389–390, S408, A426, and R443 contribute to the acetyl-CoA site; that span reads NY.

The protein in the N-terminal section; belongs to the N-acetylglucosamine-1-phosphate uridyltransferase family. This sequence in the C-terminal section; belongs to the transferase hexapeptide repeat family. As to quaternary structure, homotrimer. Requires Mg(2+) as cofactor.

It localises to the cytoplasm. It catalyses the reaction alpha-D-glucosamine 1-phosphate + acetyl-CoA = N-acetyl-alpha-D-glucosamine 1-phosphate + CoA + H(+). The catalysed reaction is N-acetyl-alpha-D-glucosamine 1-phosphate + UTP + H(+) = UDP-N-acetyl-alpha-D-glucosamine + diphosphate. It functions in the pathway nucleotide-sugar biosynthesis; UDP-N-acetyl-alpha-D-glucosamine biosynthesis; N-acetyl-alpha-D-glucosamine 1-phosphate from alpha-D-glucosamine 6-phosphate (route II): step 2/2. It participates in nucleotide-sugar biosynthesis; UDP-N-acetyl-alpha-D-glucosamine biosynthesis; UDP-N-acetyl-alpha-D-glucosamine from N-acetyl-alpha-D-glucosamine 1-phosphate: step 1/1. The protein operates within bacterial outer membrane biogenesis; LPS lipid A biosynthesis. Its function is as follows. Catalyzes the last two sequential reactions in the de novo biosynthetic pathway for UDP-N-acetylglucosamine (UDP-GlcNAc). The C-terminal domain catalyzes the transfer of acetyl group from acetyl coenzyme A to glucosamine-1-phosphate (GlcN-1-P) to produce N-acetylglucosamine-1-phosphate (GlcNAc-1-P), which is converted into UDP-GlcNAc by the transfer of uridine 5-monophosphate (from uridine 5-triphosphate), a reaction catalyzed by the N-terminal domain. The polypeptide is Bifunctional protein GlmU (Pelobacter propionicus (strain DSM 2379 / NBRC 103807 / OttBd1)).